A 357-amino-acid polypeptide reads, in one-letter code: Sulfate/thiosulfate import ATP-binding protein CysA (357 aa).

The 235-residue stretch at 3–237 folds into the ABC transporter domain; the sequence is IVIQNVSKSF…PKSPFVYDFL (235 aa). An ATP-binding site is contributed by 35–42; it reads GPSGSGKT.

It belongs to the ABC transporter superfamily. Sulfate/tungstate importer (TC 3.A.1.6) family. In terms of assembly, the complex is composed of two ATP-binding proteins (CysA), two transmembrane proteins (CysT and CysW) and a solute-binding protein (CysP).

It is found in the cell membrane. It carries out the reaction sulfate(out) + ATP + H2O = sulfate(in) + ADP + phosphate + H(+). The catalysed reaction is thiosulfate(out) + ATP + H2O = thiosulfate(in) + ADP + phosphate + H(+). Part of the ABC transporter complex CysAWTP involved in sulfate/thiosulfate import. Responsible for energy coupling to the transport system. This chain is Sulfate/thiosulfate import ATP-binding protein CysA, found in Halalkalibacterium halodurans (strain ATCC BAA-125 / DSM 18197 / FERM 7344 / JCM 9153 / C-125) (Bacillus halodurans).